Here is a 156-residue protein sequence, read N- to C-terminus: Probable succinate transporter subunit YjjB (156 aa).

A run of 4 helical transmembrane segments spans residues 7–27, 54–74, 86–106, and 128–148; these read WALL…AMVF, FGMN…IIGI, VFTV…TAMI, and FLKA…PGIW.

Belongs to the ThrE exporter (TC 2.A.79) family. As to quaternary structure, the transporter is composed of YjjB and YjjP.

It is found in the cell inner membrane. Involved in succinate export with YjjP. Both proteins are required for export. The protein is Probable succinate transporter subunit YjjB of Pectobacterium carotovorum subsp. carotovorum (strain PC1).